Reading from the N-terminus, the 78-residue chain is Major outer membrane lipoprotein Lpp (78 aa).

Positions 1–20 (MNRTKLVLGAVILGSTLLAG) are cleaved as a signal peptide. Residue Cys21 is the site of N-palmitoyl cysteine attachment. A lipid anchor (S-diacylglycerol cysteine) is attached at Cys21. Repeats lie at residues 24-34 (NAKIDQLSSDV) and 38-48 (NAKVDQLSNDV). Residues 27-75 (IDQLSSDVQTLNAKVDQLSNDVNAIRSDVQAAKDDAARANQRLDNQVRT) adopt a coiled-coil conformation. N6-murein peptidoglycan lysine is present on Lys78.

The protein belongs to the Lpp family. As to quaternary structure, homotrimer.

It localises to the cell outer membrane. The protein resides in the secreted. The protein localises to the cell wall. A highly abundant outer membrane lipoprotein that controls the distance between the inner and outer membranes. The only protein known to be covalently linked to the peptidoglycan network (PGN). Also non-covalently binds the PGN. The link between the cell outer membrane and PGN contributes to maintenance of the structural and functional integrity of the cell envelope, and maintains the correct distance between the PGN and the outer membrane. This is Major outer membrane lipoprotein Lpp from Pectobacterium atrosepticum (strain SCRI 1043 / ATCC BAA-672) (Erwinia carotovora subsp. atroseptica).